The primary structure comprises 417 residues: Gamma-glutamyl phosphate reductase (417 aa).

It belongs to the gamma-glutamyl phosphate reductase family.

It is found in the cytoplasm. The catalysed reaction is L-glutamate 5-semialdehyde + phosphate + NADP(+) = L-glutamyl 5-phosphate + NADPH + H(+). The protein operates within amino-acid biosynthesis; L-proline biosynthesis; L-glutamate 5-semialdehyde from L-glutamate: step 2/2. In terms of biological role, catalyzes the NADPH-dependent reduction of L-glutamate 5-phosphate into L-glutamate 5-semialdehyde and phosphate. The product spontaneously undergoes cyclization to form 1-pyrroline-5-carboxylate. The chain is Gamma-glutamyl phosphate reductase from Erwinia tasmaniensis (strain DSM 17950 / CFBP 7177 / CIP 109463 / NCPPB 4357 / Et1/99).